A 479-amino-acid polypeptide reads, in one-letter code: Altronate oxidoreductase (479 aa).

18-29 lines the NAD(+) pocket; sequence IIQFGEGNFLRA.

This sequence belongs to the mannitol dehydrogenase family. UxaB subfamily.

It catalyses the reaction D-altronate + NAD(+) = keto-D-tagaturonate + NADH + H(+). It participates in carbohydrate metabolism; pentose and glucuronate interconversion. In Bacteroides thetaiotaomicron (strain ATCC 29148 / DSM 2079 / JCM 5827 / CCUG 10774 / NCTC 10582 / VPI-5482 / E50), this protein is Altronate oxidoreductase.